The chain runs to 188 residues: Killer cell lectin-like receptor subfamily G member 1 (188 aa).

Over 1–33 (MADSSIYSTLELPEAPQVQDESRWKLKAVLHRP) the chain is Cytoplasmic. The short motif at 5 to 10 (SIYSTL) is the ITIM motif element. A helical; Signal-anchor for type II membrane protein transmembrane segment spans residues 34–56 (HLSRFAMVALGLLTVILMSLLMY). Topologically, residues 57-188 (QRILCCGSKD…LQWICKKVLY (132 aa)) are extracellular. The cysteines at positions 75 and 86 are disulfide-linked. Residues N82 and N97 are each glycosylated (N-linked (GlcNAc...) asparagine). One can recognise a C-type lectin domain in the interval 82–184 (NGSHCYYFSM…CEVALQWICK (103 aa)). Disulfide bonds link C103–C183 and C162–C175.

In terms of assembly, forms a monomer and homodimer; disulfide-linked. Interacts (via ITIM motif) with PTPN11 and INPP5D. Post-translationally, phosphorylated in response to monoclonal antibody G63 binding and antigenic stimulation. Expressed specifically on natural killer (NK) cells and activated CD8 T-cells. Not detected in spleen, thymus, lymph node, testis, brain or kidney. Not detected on mast cell lines, bone marrow-derived mast cells, or peritoneal mast cells.

It localises to the cell membrane. In terms of biological role, plays an inhibitory role on natural killer (NK) cells and T-cell functions upon binding to their non-MHC ligands. May mediate missing self recognition by binding to a highly conserved site on classical cadherins, enabling it to monitor expression of E-cadherin/CDH1, N-cadherin/CDH2 and R-cadherin/CDH4 on target cells. The sequence is that of Killer cell lectin-like receptor subfamily G member 1 (Klrg1) from Mus musculus (Mouse).